A 158-amino-acid polypeptide reads, in one-letter code: Endoribonuclease YbeY (158 aa).

Zn(2+)-binding residues include H119, H123, and D129.

Belongs to the endoribonuclease YbeY family. Zn(2+) is required as a cofactor.

The protein localises to the cytoplasm. In terms of biological role, single strand-specific metallo-endoribonuclease involved in late-stage 70S ribosome quality control and in maturation of the 3' terminus of the 16S rRNA. This Chlamydia abortus (strain DSM 27085 / S26/3) (Chlamydophila abortus) protein is Endoribonuclease YbeY.